The sequence spans 197 residues: ATP-dependent Clp protease proteolytic subunit 2 (197 aa).

Catalysis depends on serine 96, which acts as the Nucleophile. Histidine 121 is an active-site residue.

Belongs to the peptidase S14 family. As to quaternary structure, fourteen ClpP subunits assemble into 2 heptameric rings which stack back to back to give a disk-like structure with a central cavity, resembling the structure of eukaryotic proteasomes.

The protein resides in the cytoplasm. The enzyme catalyses Hydrolysis of proteins to small peptides in the presence of ATP and magnesium. alpha-casein is the usual test substrate. In the absence of ATP, only oligopeptides shorter than five residues are hydrolyzed (such as succinyl-Leu-Tyr-|-NHMec, and Leu-Tyr-Leu-|-Tyr-Trp, in which cleavage of the -Tyr-|-Leu- and -Tyr-|-Trp bonds also occurs).. Functionally, cleaves peptides in various proteins in a process that requires ATP hydrolysis. Has a chymotrypsin-like activity. Plays a major role in the degradation of misfolded proteins. This is ATP-dependent Clp protease proteolytic subunit 2 from Parasynechococcus marenigrum (strain WH8102).